We begin with the raw amino-acid sequence, 602 residues long: Prostaglandin G/H synthase 1 (602 aa).

The signal sequence occupies residues 1–26 (MSRRSLSLWFPLLLLLLLPPTPSVLL). The region spanning 34–72 (PVNPCCYYPCQNQGVCVRFGLDNYQCDCTRTGYSGPNCT) is the EGF-like domain. Intrachain disulfides connect C38–C49, C39–C161, C43–C59, and C61–C71. 3 N-linked (GlcNAc...) asparagine glycosylation sites follow: N70, N106, and N146. H209 serves as the catalytic Proton acceptor. The For cyclooxygenase activity role is filled by Y387. H390 is a heme b binding site. An intrachain disulfide couples C571 to C577.

This sequence belongs to the prostaglandin G/H synthase family. Homodimer. Heme b is required as a cofactor.

It is found in the microsome membrane. It localises to the endoplasmic reticulum membrane. It carries out the reaction (5Z,8Z,11Z,14Z)-eicosatetraenoate + AH2 + 2 O2 = prostaglandin H2 + A + H2O. The catalysed reaction is (5Z,8Z,11Z,14Z)-eicosatetraenoate + 2 O2 = prostaglandin G2. It catalyses the reaction prostaglandin G2 + AH2 = prostaglandin H2 + A + H2O. The enzyme catalyses (9Z,12Z)-octadecadienoate + AH2 + O2 = (9R)-hydroxy-(10E,12Z)-octadecadienoate + A + H2O. It carries out the reaction (9Z,12Z)-octadecadienoate + AH2 + O2 = (9S)-hydroxy-(10E,12Z)-octadecadienoate + A + H2O. The catalysed reaction is (9Z,12Z)-octadecadienoate + AH2 + O2 = (13S)-hydroxy-(9Z,11E)-octadecadienoate + A + H2O. It catalyses the reaction (9Z,12Z)-octadecadienoate + AH2 + O2 = (13R)-hydroxy-(9Z,11E)-octadecadienoate + A + H2O. It functions in the pathway lipid metabolism; prostaglandin biosynthesis. With respect to regulation, the cyclooxygenase activity is inhibited by nonsteroidal anti-inflammatory drugs (NSAIDs) including ibuprofen, flurbiprofen, ketoprofen, naproxen, flurbiprofen, anirolac, fenclofenac and diclofenac. Dual cyclooxygenase and peroxidase that plays an important role in the biosynthesis pathway of prostanoids, a class of C20 oxylipins mainly derived from arachidonate ((5Z,8Z,11Z,14Z)-eicosatetraenoate, AA, C20:4(n-6)), with a particular role in the inflammatory response. The cyclooxygenase activity oxygenates AA to the hydroperoxy endoperoxide prostaglandin G2 (PGG2), and the peroxidase activity reduces PGG2 to the hydroxy endoperoxide prostaglandin H2 (PGH2), the precursor of all 2-series prostaglandins and thromboxanes. This complex transformation is initiated by abstraction of hydrogen at carbon 13 (with S-stereochemistry), followed by insertion of molecular O2 to form the endoperoxide bridge between carbon 9 and 11 that defines prostaglandins. The insertion of a second molecule of O2 (bis-oxygenase activity) yields a hydroperoxy group in PGG2 that is then reduced to PGH2 by two electrons. Involved in the constitutive production of prostanoids in particular in the stomach and platelets. In gastric epithelial cells, it is a key step in the generation of prostaglandins, such as prostaglandin E2 (PGE2), which plays an important role in cytoprotection. In platelets, it is involved in the generation of thromboxane A2 (TXA2), which promotes platelet activation and aggregation, vasoconstriction and proliferation of vascular smooth muscle cells. Can also use linoleate (LA, (9Z,12Z)-octadecadienoate, C18:2(n-6)) as substrate and produce hydroxyoctadecadienoates (HODEs) in a regio- and stereospecific manner, being (9R)-HODE ((9R)-hydroxy-(10E,12Z)-octadecadienoate) and (13S)-HODE ((13S)-hydroxy-(9Z,11E)-octadecadienoate) its major products. The chain is Prostaglandin G/H synthase 1 from Mus musculus (Mouse).